A 195-amino-acid polypeptide reads, in one-letter code: Inner membrane-spanning protein YciB (195 aa).

5 helical membrane passes run 34–54 (IYGATATLILASVIVYGALWL), 65–85 (FTLGACLVLGGLTLAFHEDTF), 88–108 (WKAPLVNWLFALAFAGSHFIG), 131–151 (LNIAWVVFFLVCGFANLYVVF), and 160–180 (FKVFGSLGMTLLFLIGQGLFL).

This sequence belongs to the YciB family.

It localises to the cell inner membrane. Plays a role in cell envelope biogenesis, maintenance of cell envelope integrity and membrane homeostasis. The polypeptide is Inner membrane-spanning protein YciB (Pseudomonas aeruginosa (strain LESB58)).